Reading from the N-terminus, the 248-residue chain is UPF0246 protein A1I_02510 (248 aa).

This sequence belongs to the UPF0246 family.

The chain is UPF0246 protein A1I_02510 from Rickettsia bellii (strain OSU 85-389).